The following is a 463-amino-acid chain: Putative sodium-coupled neutral amino acid transporter 11 (463 aa).

Residues 1-27 (MGYPGQRPVIPPQSHRDDRETLVSEHK) are disordered. Over residues 14-25 (SHRDDRETLVSE) the composition is skewed to basic and acidic residues. The next 11 membrane-spanning stretches (helical) occupy residues 38–58 (AVFN…PYSM), 65–85 (LGIL…ILLI), 105–125 (GFPG…IAMI), 150–170 (LLIG…LPLS), 178–198 (LGKI…IVVA), 225–245 (VGVM…YGSL), 256–276 (IIHV…TCGY), 298–320 (VTFG…CFVT), 336–356 (VCHI…SLLI), 358–378 (CLGI…IFII), and 397–417 (IMSC…FVMA). 3 N-linked (GlcNAc...) asparagine glycosylation sites follow: Asn-437, Asn-442, and Asn-458.

Belongs to the amino acid/polyamine transporter 2 family.

It is found in the membrane. Its function is as follows. Putative sodium-dependent amino acid/proton antiporter. In Bos taurus (Bovine), this protein is Putative sodium-coupled neutral amino acid transporter 11 (SLC38A11).